We begin with the raw amino-acid sequence, 494 residues long: Hydroxyneurosporene desaturase (494 aa).

This sequence belongs to the carotenoid/retinoid oxidoreductase family.

The catalysed reaction is rhodopin + A = (3E)-3,4-didehydrorhodopin + AH2. Its pathway is carotenoid biosynthesis; spheroidene biosynthesis. Its function is as follows. Catalyzes the introduction of C-3,4 double bonds into 1-hydroxyneurosporene (1-HO-Neu) to yield demethylspheroidene (DMS). The chain is Hydroxyneurosporene desaturase (crtD) from Rhodobacter capsulatus (strain ATCC BAA-309 / NBRC 16581 / SB1003).